Reading from the N-terminus, the 187-residue chain is uncharacterized protein (187 aa).

This is an uncharacterized protein from Dictyostelium discoideum (Social amoeba).